The following is a 179-amino-acid chain: Putative endogenous retrovirus group FC1 Env polyprotein (179 aa).

Positions 1–22 (MARPSPLCLLLLLTLLPPIVPS) are cleaved as a signal peptide. The truncated surface protein stretch occupies residues 23-179 (NSLLTEPPFR…SKLRIFRTYV (157 aa)). N69 is a glycosylation site (N-linked (GlcNAc...) asparagine).

It belongs to the gamma type-C retroviral envelope protein family. HERV class-I F(c)1 env subfamily.

Its subcellular location is the virion. Functionally, retroviral envelope proteins mediate receptor recognition and membrane fusion during early infection. Endogenous envelope proteins may have kept, lost or modified their original function during evolution. This Gorilla gorilla gorilla (Western lowland gorilla) protein is Putative endogenous retrovirus group FC1 Env polyprotein (ERVFC1).